We begin with the raw amino-acid sequence, 565 residues long: MRSDTIKTGFEKAPHRSLLKATGTIHGKSDYQKPFIGICNSFNELIPGHAHLQELGRIAKEEVRKAGGVPFEFNTIGVCDGIAMGHIGMRYSLASRELIADSVETVAEAHRLDGLVCIPNCDKITPGMMMAALRINIPVIFVSGGPMKAGHTPSGKTVDLISVFEAVGQRSTGEISEEELETIEENACPGCGSCSGMFTANSMNCLSEALGFALPGNGTILAGDPRRNELVREASRRIIDLVEKNVRPRDILSRSALLNAFALDFAMGGSTNTILHTLAIANEAELDFDFSELNGLSAKTPYICKVSPATMDVHIEDVDRAGGISAILHELSKIDGLLDLSVPTVTGKSLGENIKNAEVLNRKVIRSIEDPYSATGGLCVLYGNLAPQGAVIKTGAVSAPMMHHSGPAKVYDSQDDAIAGIMGGDVHSGDVVVIRYEGPKGGPGMPEMLSPTSAIMGRGLGDSVALITDGRFSGGSRGACIGHVSPEAAVKGPIAALRNGDTVTIDIPGRSITMEVSDEEIADRIAGLPAFVPKIRKGYLARYAEMVTSANTGAILKTPVSCEPK.

D80 provides a ligand contact to Mg(2+). C121 is a [2Fe-2S] cluster binding site. Residues D122 and K123 each coordinate Mg(2+). K123 is modified (N6-carboxylysine). C194 contacts [2Fe-2S] cluster. A Mg(2+)-binding site is contributed by E447. S473 functions as the Proton acceptor in the catalytic mechanism.

It belongs to the IlvD/Edd family. As to quaternary structure, homodimer. [2Fe-2S] cluster serves as cofactor. Requires Mg(2+) as cofactor.

The catalysed reaction is (2R)-2,3-dihydroxy-3-methylbutanoate = 3-methyl-2-oxobutanoate + H2O. It catalyses the reaction (2R,3R)-2,3-dihydroxy-3-methylpentanoate = (S)-3-methyl-2-oxopentanoate + H2O. The protein operates within amino-acid biosynthesis; L-isoleucine biosynthesis; L-isoleucine from 2-oxobutanoate: step 3/4. It participates in amino-acid biosynthesis; L-valine biosynthesis; L-valine from pyruvate: step 3/4. Functionally, functions in the biosynthesis of branched-chain amino acids. Catalyzes the dehydration of (2R,3R)-2,3-dihydroxy-3-methylpentanoate (2,3-dihydroxy-3-methylvalerate) into 2-oxo-3-methylpentanoate (2-oxo-3-methylvalerate) and of (2R)-2,3-dihydroxy-3-methylbutanoate (2,3-dihydroxyisovalerate) into 2-oxo-3-methylbutanoate (2-oxoisovalerate), the penultimate precursor to L-isoleucine and L-valine, respectively. The protein is Dihydroxy-acid dehydratase of Chlorobium luteolum (strain DSM 273 / BCRC 81028 / 2530) (Pelodictyon luteolum).